The sequence spans 492 residues: UPF0236 protein TTE1650/TTE2708 (492 aa).

The protein belongs to the UPF0236 family.

The protein is UPF0236 protein TTE1650/TTE2708 of Caldanaerobacter subterraneus subsp. tengcongensis (strain DSM 15242 / JCM 11007 / NBRC 100824 / MB4) (Thermoanaerobacter tengcongensis).